The chain runs to 308 residues: UDP-N-acetylenolpyruvoylglucosamine reductase (308 aa).

Residues 32–197 (QTGGKADYYL…LEAAFTLAPG (166 aa)) enclose the FAD-binding PCMH-type domain. Arg-176 is an active-site residue. The active-site Proton donor is the Ser-226. The active site involves Glu-296.

It belongs to the MurB family. It depends on FAD as a cofactor.

It is found in the cytoplasm. It carries out the reaction UDP-N-acetyl-alpha-D-muramate + NADP(+) = UDP-N-acetyl-3-O-(1-carboxyvinyl)-alpha-D-glucosamine + NADPH + H(+). Its pathway is cell wall biogenesis; peptidoglycan biosynthesis. Functionally, cell wall formation. The protein is UDP-N-acetylenolpyruvoylglucosamine reductase of Staphylococcus saprophyticus subsp. saprophyticus (strain ATCC 15305 / DSM 20229 / NCIMB 8711 / NCTC 7292 / S-41).